The chain runs to 564 residues: Eukaryotic translation initiation factor 3 subunit L (564 aa).

Ser2 bears the N-acetylserine mark. The region spanning 331–537 (DAIRVFANIL…IHIADTKVAR (207 aa)) is the PCI domain. Residues Lys465 and Lys549 each carry the N6-acetyllysine modification.

The protein belongs to the eIF-3 subunit L family. Component of the eukaryotic translation initiation factor 3 (eIF-3) complex, which is composed of 13 subunits: EIF3A, EIF3B, EIF3C, EIF3D, EIF3E, EIF3F, EIF3G, EIF3H, EIF3I, EIF3J, EIF3K, EIF3L and EIF3M. The eIF-3 complex appears to include 3 stable modules: module A is composed of EIF3A, EIF3B, EIF3G and EIF3I; module B is composed of EIF3F, EIF3H, and EIF3M; and module C is composed of EIF3C, EIF3D, EIF3E, EIF3K and EIF3L. EIF3C of module C binds EIF3B of module A and EIF3H of module B, thereby linking the three modules. EIF3J is a labile subunit that binds to the eIF-3 complex via EIF3B. The eIF-3 complex may interact with RPS6KB1 under conditions of nutrient depletion. Mitogenic stimulation may lead to binding and activation of a complex composed of MTOR and RPTOR, leading to phosphorylation and release of RPS6KB1 and binding of EIF4B to eIF-3. Interacts with RRN3.

The protein localises to the cytoplasm. Component of the eukaryotic translation initiation factor 3 (eIF-3) complex, which is required for several steps in the initiation of protein synthesis. The eIF-3 complex associates with the 40S ribosome and facilitates the recruitment of eIF-1, eIF-1A, eIF-2:GTP:methionyl-tRNAi and eIF-5 to form the 43S pre-initiation complex (43S PIC). The eIF-3 complex stimulates mRNA recruitment to the 43S PIC and scanning of the mRNA for AUG recognition. The eIF-3 complex is also required for disassembly and recycling of post-termination ribosomal complexes and subsequently prevents premature joining of the 40S and 60S ribosomal subunits prior to initiation. The eIF-3 complex specifically targets and initiates translation of a subset of mRNAs involved in cell proliferation, including cell cycling, differentiation and apoptosis, and uses different modes of RNA stem-loop binding to exert either translational activation or repression. This chain is Eukaryotic translation initiation factor 3 subunit L (Eif3l), found in Mus musculus (Mouse).